The chain runs to 345 residues: Phosphoribosylformylglycinamidine cyclo-ligase (345 aa).

This sequence belongs to the AIR synthase family.

The protein localises to the cytoplasm. The enzyme catalyses 2-formamido-N(1)-(5-O-phospho-beta-D-ribosyl)acetamidine + ATP = 5-amino-1-(5-phospho-beta-D-ribosyl)imidazole + ADP + phosphate + H(+). Its pathway is purine metabolism; IMP biosynthesis via de novo pathway; 5-amino-1-(5-phospho-D-ribosyl)imidazole from N(2)-formyl-N(1)-(5-phospho-D-ribosyl)glycinamide: step 2/2. The polypeptide is Phosphoribosylformylglycinamidine cyclo-ligase (Shewanella woodyi (strain ATCC 51908 / MS32)).